Reading from the N-terminus, the 246-residue chain is Envelope glycoprotein gp95 (246 aa).

The Extracellular portion of the chain corresponds to Ile-1–Leu-192. An N-linked (GlcNAc...) asparagine; by host glycan is attached at Asn-31. An intrachain disulfide couples Cys-50 to Cys-86. The fusion peptide stretch occupies residues Gly-58 to Leu-78. The stretch at Ala-75–Leu-125 forms a coiled coil. A glycan (N-linked (GlcNAc...) asparagine; by host) is linked at Asn-93. The interval Leu-114–Gly-130 is immunosuppression. An intrachain disulfide couples Cys-131 to Cys-138. The N-linked (GlcNAc...) asparagine; by host glycan is linked to Asn-141. Positions Ser-143–Trp-173 form a coiled coil. A helical membrane pass occupies residues Leu-193 to Val-213. S-palmitoyl cysteine; by host attachment occurs at residues Cys-205 and Cys-208. Over Cys-214–Val-246 the chain is Cytoplasmic.

Belongs to the Alpharetroviruses envelope glycoprotein family. As to quaternary structure, heterodimer with the transmembrane protein. The mature envelope protein (Env) consists of a trimer of SU-TM heterodimers attached by a labile interchain disulfide bond. Heterodimer with the surface protein. The mature envelope protein (Env) consists of a trimer of SU-TM heterodimers attached by a labile interchain disulfide bond. Specific enzymatic cleavages in vivo yield mature proteins. Envelope glycoproteins are synthesized as an inactive precursor that is N-glycosylated and processed likely by host cell furin or by a furin-like protease in the Golgi to yield the mature SU and TM proteins. The cleavage site between SU and TM requires the minimal sequence [KR]-X-[KR]-R. Post-translationally, the transmembrane protein is palmitoylated. Palmitoylation is necessary for glycoprotein function and infectivity.

Its subcellular location is the virion membrane. The protein localises to the host cell membrane. The surface protein (SU) attaches the virus to the host cell by binding to its receptor. This interaction triggers the refolding of the transmembrane protein (TM) thereby unmasking its fusion peptide and the formation of a reactive thiolate to activate its fusogenic potential. Fusion occurs at the host cell plasma membrane. In terms of biological role, the transmembrane protein (TM) acts as a class I viral fusion protein. Under the current model, the protein has at least 3 conformational states: pre-fusion native state, pre-hairpin intermediate state, and post-fusion hairpin state. During viral and target cell membrane fusion, the coiled coil regions (heptad repeats) assume a trimer-of-hairpins structure, positioning the fusion peptide in close proximity to the C-terminal region of the ectodomain. The formation of this structure appears to drive apposition and subsequent fusion of viral and target cell membranes. Membranes fusion leads to delivery of the nucleocapsid into the cytoplasm. The protein is Envelope glycoprotein gp95 (env) of Galliformes.